The sequence spans 579 residues: A-type ATP synthase subunit A (579 aa).

ATP is bound at residue Gly229–Thr236.

The protein belongs to the ATPase alpha/beta chains family. In terms of assembly, has multiple subunits with at least A(3), B(3), C, D, E, F, H, I and proteolipid K(x).

Its subcellular location is the cell membrane. The enzyme catalyses ATP + H2O + 4 H(+)(in) = ADP + phosphate + 5 H(+)(out). Component of the A-type ATP synthase that produces ATP from ADP in the presence of a proton gradient across the membrane. The A chain is the catalytic subunit. The chain is A-type ATP synthase subunit A from Methanocella arvoryzae (strain DSM 22066 / NBRC 105507 / MRE50).